A 433-amino-acid chain; its full sequence is Probable carboxypeptidase ATEG_02905 (433 aa).

The N-terminal stretch at 1-18 (MKSAISLLLASAATYVGA) is a signal peptide. Residues 20–40 (PHPEPPQLVLSPSTSTGVHGD) form a disordered region. Asparagine 92 carries an N-linked (GlcNAc...) asparagine glycan. Aspartate 161 is a Zn(2+) binding site. Glutamate 193 (proton acceptor) is an active-site residue. Glutamate 194 contributes to the Zn(2+) binding site.

Belongs to the peptidase M20A family. It depends on Zn(2+) as a cofactor.

The protein localises to the secreted. In Aspergillus terreus (strain NIH 2624 / FGSC A1156), this protein is Probable carboxypeptidase ATEG_02905.